A 463-amino-acid chain; its full sequence is Chaperone SurA (463 aa).

Residues 1–25 (MTKPFSVVLASLLAITSTVSPLASA) form the signal peptide. PpiC domains are found at residues 174–276 (GSQY…KLVE) and 289–388 (VTEY…QRVG). Disordered stretches follow at residues 328-348 (QATAKESSEDTNSRGQGGDLG) and 432-463 (RTGDRADDNATAAPAKSADPAAPSPPPAKPTR). A compositionally biased stretch (low complexity) spans 440-452 (NATAAPAKSADPA). A compositionally biased stretch (pro residues) spans 453–463 (APSPPPAKPTR).

It is found in the periplasm. The enzyme catalyses [protein]-peptidylproline (omega=180) = [protein]-peptidylproline (omega=0). Functionally, chaperone involved in the correct folding and assembly of outer membrane proteins. Recognizes specific patterns of aromatic residues and the orientation of their side chains, which are found more frequently in integral outer membrane proteins. May act in both early periplasmic and late outer membrane-associated steps of protein maturation. This Xanthomonas euvesicatoria pv. vesicatoria (strain 85-10) (Xanthomonas campestris pv. vesicatoria) protein is Chaperone SurA.